We begin with the raw amino-acid sequence, 136 residues long: Small ribosomal subunit protein uS19 (136 aa).

Belongs to the universal ribosomal protein uS19 family.

Protein S19 forms a complex with S13 that binds strongly to the 16S ribosomal RNA. The chain is Small ribosomal subunit protein uS19 from Methanocorpusculum labreanum (strain ATCC 43576 / DSM 4855 / Z).